The following is a 478-amino-acid chain: Ribulose bisphosphate carboxylase large chain (478 aa).

Residues 1 to 2 (MS) constitute a propeptide that is removed on maturation. Proline 3 is modified (N-acetylproline). Position 14 is an N6,N6,N6-trimethyllysine (lysine 14). The substrate site is built by asparagine 123 and threonine 173. Lysine 175 functions as the Proton acceptor in the catalytic mechanism. Lysine 177 lines the substrate pocket. Mg(2+)-binding residues include lysine 201, aspartate 203, and glutamate 204. The residue at position 201 (lysine 201) is an N6-carboxylysine. Histidine 294 (proton acceptor) is an active-site residue. Residues arginine 295, histidine 327, and serine 379 each coordinate substrate.

It belongs to the RuBisCO large chain family. Type I subfamily. In terms of assembly, heterohexadecamer of 8 large chains and 8 small chains; disulfide-linked. The disulfide link is formed within the large subunit homodimers. Mg(2+) is required as a cofactor. Post-translationally, the disulfide bond which can form in the large chain dimeric partners within the hexadecamer appears to be associated with oxidative stress and protein turnover.

The protein resides in the plastid. It localises to the chloroplast. The enzyme catalyses 2 (2R)-3-phosphoglycerate + 2 H(+) = D-ribulose 1,5-bisphosphate + CO2 + H2O. The catalysed reaction is D-ribulose 1,5-bisphosphate + O2 = 2-phosphoglycolate + (2R)-3-phosphoglycerate + 2 H(+). In terms of biological role, ruBisCO catalyzes two reactions: the carboxylation of D-ribulose 1,5-bisphosphate, the primary event in carbon dioxide fixation, as well as the oxidative fragmentation of the pentose substrate in the photorespiration process. Both reactions occur simultaneously and in competition at the same active site. The chain is Ribulose bisphosphate carboxylase large chain from Neurachne munroi.